The chain runs to 211 residues: Redox-sensing transcriptional repressor Rex (211 aa).

Positions 17-56 (KYHRYLEELMKNEVDRISSKELGEKIGFTASQIRQDLNCF) form a DNA-binding region, H-T-H motif. Position 91–96 (91–96 (GAGNIG)) interacts with NAD(+).

It belongs to the transcriptional regulatory Rex family. As to quaternary structure, homodimer.

It is found in the cytoplasm. Modulates transcription in response to changes in cellular NADH/NAD(+) redox state. The polypeptide is Redox-sensing transcriptional repressor Rex (Clostridium beijerinckii (strain ATCC 51743 / NCIMB 8052) (Clostridium acetobutylicum)).